The chain runs to 459 residues: Polycomb protein mes-6 (459 aa).

5 WD repeats span residues 146–186 (SVGW…CLIV), 192–231 (CHAGTILSVDWSTDGDFILSCGFDHQLMEWDLSVKQVKEH), 305–346 (MHSD…GEVE), 370–409 (SGSAWFIKFAVDPRRRWLVCGGAGGSVMFFDLRNNEETNP), and 415–454 (VGSRTVRQASFSTCGRFLVLVTDEGFVCRFDRVSASVDAK).

It belongs to the WD repeat ESC family. Interacts directly with the N-terminal domain of mes-2. Forms a heterotrimeric complex with mes-2 and mes-3. Does not interact with mes-4. In terms of tissue distribution, in adults, it is predominantly expressed in the germline, and weakly expressed in intestinal cells.

The protein resides in the nucleus. In terms of biological role, polycomb group (PcG) protein. PcG proteins act by forming multiprotein complexes, which are required to maintain the transcriptionally repressive state of homeotic genes throughout development. In association with the nfya-1-NF-Y complex, may play a role in repressing the expression of the homeobox protein egl-5 in tissues such as the head. PcG proteins are not required to initiate repression, but to maintain it during later stages of development. The mes-2/mes-3/mes-6 complex may participate in the global inactivation of the X chromosomes in germline cells. The complex may act via methylation of histone H3 'Lys-27', rendering chromatin heritably changed in its expressibility. This complex is required to exclude mes-4 from the inactivated X-chromosomes in germline cells. Required for small-RNA-induced H3K27 trimethylation. The chain is Polycomb protein mes-6 from Caenorhabditis elegans.